A 349-amino-acid polypeptide reads, in one-letter code: ATPase GET3 (349 aa).

26–33 (KGGVGKTT) is an ATP binding site. The active site involves aspartate 57. ATP contacts are provided by glutamate 242 and asparagine 269. Positions 281 and 284 each coordinate Zn(2+).

Belongs to the arsA ATPase family. In terms of assembly, homodimer. Component of the Golgi to ER traffic (GET) complex, which is composed of GET1, GET2 and GET3. Within the complex, GET1 and GET2 form a heterotetramer which is stabilized by phosphatidylinositol binding and which binds to the GET3 homodimer. Interacts with the chloride channel protein GEF1.

The protein localises to the cytoplasm. The protein resides in the endoplasmic reticulum. It localises to the golgi apparatus. Functionally, ATPase required for the post-translational delivery of tail-anchored (TA) proteins to the endoplasmic reticulum. Recognizes and selectively binds the transmembrane domain of TA proteins in the cytosol. This complex then targets to the endoplasmic reticulum by membrane-bound receptors GET1 and GET2, where the tail-anchored protein is released for insertion. This process is regulated by ATP binding and hydrolysis. ATP binding drives the homodimer towards the closed dimer state, facilitating recognition of newly synthesized TA membrane proteins. ATP hydrolysis is required for insertion. Subsequently, the homodimer reverts towards the open dimer state, lowering its affinity for the GET1-GET2 receptor, and returning it to the cytosol to initiate a new round of targeting. Cooperates with the HDEL receptor ERD2 to mediate the ATP-dependent retrieval of resident ER proteins that contain a C-terminal H-D-E-L retention signal from the Golgi to the ER. Involved in low-level resistance to the oxyanions arsenite and arsenate, and in heat tolerance. This is ATPase GET3 from Lodderomyces elongisporus (strain ATCC 11503 / CBS 2605 / JCM 1781 / NBRC 1676 / NRRL YB-4239) (Yeast).